The following is a 203-amino-acid chain: Ras-related protein Rab-18 (203 aa).

Residues Ser20, Gly23, Lys24, Ser25, Ser26, Asp37, Pro38, Thr43, Gly69, Lys126, Asp128, and Ala155 each coordinate GTP. An Effector region motif is present at residues 40–48; sequence QAATIGVDF. 2 S-geranylgeranyl cysteine lipidation sites follow: Cys201 and Cys203. Cysteine methyl ester is present on Cys203.

Belongs to the small GTPase superfamily. Rab family.

It catalyses the reaction GTP + H2O = GDP + phosphate + H(+). In terms of biological role, the small GTPases Rab are key regulators of intracellular membrane trafficking, from the formation of transport vesicles to their fusion with membranes. Rabs cycle between an inactive GDP-bound form and an active GTP-bound form that is able to recruit to membranes different sets of downstream effectors directly responsible for vesicle formation, movement, tethering and fusion. Plays a role in apical endocytosis/recycling. May be implicated in transport between the plasma membrane and early endosomes. Plays a role in the shedding of pathogen spores from intestinal cells. This chain is Ras-related protein Rab-18 (rab-18), found in Caenorhabditis elegans.